We begin with the raw amino-acid sequence, 295 residues long: MGFSFLLATVQKERMKRRSRTRSRSRRRAKQDPKTWVARYIPQDLLIEILTRLPPKSVMRFKCVSKFWSSLLSSRYFCNRFLIVPSQPQPSLYMCLLDRYNYSKSLILSSAPSTSPYSFVFDQDLTIRKMGGFFLRILRGFIFFTRNLKARIYNPTTRQLVILPTIKESDIIAGPPYNILYFICHDPVNDRYKLLCTVSYASDNDLQNLKSELWIFVLEAGGSWKRVANEFPHHVPSHLDLNMNGVLYFLAWTDPHTCMLVSFDVRSEEFNTMQVPRNAGDTLPRQEKGVVNRVW.

The F-box domain occupies 35-80; that stretch reads TWVARYIPQDLLIEILTRLPPKSVMRFKCVSKFWSSLLSSRYFCNR.

The protein is F-box only protein 8 (FBX8) of Arabidopsis thaliana (Mouse-ear cress).